Here is a 285-residue protein sequence, read N- to C-terminus: Small ribosomal subunit protein uS3 (285 aa).

In terms of domain architecture, KH type-2 spans 39–107 (VREFLKKKLK…PVAVNIEEVR (69 aa)). Positions 211 to 285 (GDAPVMRGED…RAAPPAAKGE (75 aa)) are disordered. Residues 217–241 (RGEDRPEDDRRRRNPRGDRPGDRRG) are compositionally biased toward basic and acidic residues. Gly residues predominate over residues 242–255 (PGAGRGGPGAGRGP). Composition is skewed to low complexity over residues 256 to 267 (ADGASAAPSGDA) and 276 to 285 (RAAPPAAKGE).

The protein belongs to the universal ribosomal protein uS3 family. Part of the 30S ribosomal subunit. Forms a tight complex with proteins S10 and S14.

In terms of biological role, binds the lower part of the 30S subunit head. Binds mRNA in the 70S ribosome, positioning it for translation. This Leptothrix cholodnii (strain ATCC 51168 / LMG 8142 / SP-6) (Leptothrix discophora (strain SP-6)) protein is Small ribosomal subunit protein uS3.